We begin with the raw amino-acid sequence, 782 residues long: Nucleolar RNA helicase 2 (782 aa).

Residues 1 to 184 (MPGKLRSASK…IPVEQKEGAF (184 aa)) form a disordered region. S7 and S13 each carry phosphoserine. Composition is skewed to basic and acidic residues over residues 26 to 42 (PSEK…KTDE) and 99 to 117 (EPLE…KAEE). Residue K39 is modified to N6-acetyllysine. A Glycyl lysine isopeptide (Lys-Gly) (interchain with G-Cter in SUMO1); alternate cross-link involves residue K114. Residue K114 forms a Glycyl lysine isopeptide (Lys-Gly) (interchain with G-Cter in SUMO2); alternate linkage. S119 is subject to Phosphoserine. Residues 134-143 (GKEANGDVGE) show a composition bias toward basic and acidic residues. An N6-acetyllysine modification is found at K135. Phosphoserine occurs at positions 145 and 169. The span at 172-181 (EKEIPVEQKE) shows a compositional bias: basic and acidic residues. Positions 182 to 210 (GAFSNFPISEETVKLLKARGVNFLFPIQA) match the Q motif motif. In terms of domain architecture, Helicase ATP-binding spans 213–392 (FHHVYSGKDL…KKYMKSTYEQ (180 aa)). 226–233 (ARTGTGKT) contributes to the ATP binding site. T292 carries the post-translational modification Phosphothreonine. The DEAD box signature appears at 335–338 (DEVD). Residues 425–569 (DVIRVYSGHQ…GVPSATEIIK (145 aa)) form the Helicase C-terminal domain. A Phosphoserine modification is found at S563. N6-acetyllysine is present on K596. A disordered region spans residues 704 to 782 (ATEQPELEGP…KRSFSKAFGQ (79 aa)). Tandem repeats lie at residues 720-724 (GRGQR), 731-735 (FRGQR), and 741-747 (FRGQGQR). A 3 X 5 AA repeats region spans residues 720-747 (GRGQRDGSRGSFRGQRGGSRNFRGQGQR). Residues 728 to 756 (RGSFRGQRGGSRNFRGQGQRGGSRNFRGQ) show a composition bias toward low complexity. An N6-acetyllysine modification is found at K778.

Belongs to the DEAD box helicase family. DDX21/DDX50 subfamily. Homodimer; homodimerizes via its N-terminus. Found in a multi-helicase-TICAM1 complex at least composed of DHX36, DDX1, DDX21 and TICAM1; this complex exists in resting cells with or without poly(I:C) RNA ligand stimulation. Interacts (via C-terminus) with TICAM1 (via TIR domain). Interacts with DHX36 (via C-terminus); this interaction serves as bridges to TICAM1. Interacts (via C-terminus) with DDX1 (via B30.2/SPRY domain); this interaction serves as bridges to TICAM1. Component of the B-WICH complex, at least composed of SMARCA5/SNF2H, BAZ1B/WSTF, SF3B1, DEK, MYO1C, ERCC6, MYBBP1A and DDX21. Interacts with C1QBP. Interacts with JUN. Interacts with WDR46. Interacts with MCM3AP. Interacts with WDR43. Interacts with KPNA3. Interacts with GID4. Post-translationally, acetylation by CREBBP/CBP inhibits the helicase activity. Deacetylation by SIRT7 promotes the helicase activity and overcomes R-loop-mediated stalling of RNA polymerases.

The protein resides in the nucleus. Its subcellular location is the nucleolus. It is found in the nucleoplasm. The protein localises to the cytoplasm. It localises to the cytosol. The protein resides in the mitochondrion. It carries out the reaction ATP + H2O = ADP + phosphate + H(+). Acetylation inhibits the helicase activity. Functionally, RNA helicase that acts as a sensor of the transcriptional status of both RNA polymerase (Pol) I and II: promotes ribosomal RNA (rRNA) processing and transcription from polymerase II (Pol II). Binds various RNAs, such as rRNAs, snoRNAs, 7SK and, at lower extent, mRNAs. In the nucleolus, localizes to rDNA locus, where it directly binds rRNAs and snoRNAs, and promotes rRNA transcription, processing and modification. Required for rRNA 2'-O-methylation, possibly by promoting the recruitment of late-acting snoRNAs SNORD56 and SNORD58 with pre-ribosomal complexes. In the nucleoplasm, binds 7SK RNA and is recruited to the promoters of Pol II-transcribed genes: acts by facilitating the release of P-TEFb from inhibitory 7SK snRNP in a manner that is dependent on its helicase activity, thereby promoting transcription of its target genes. Functions as a cofactor for JUN-activated transcription: required for phosphorylation of JUN at 'Ser-77'. Can unwind double-stranded RNA (helicase) and can fold or introduce a secondary structure to a single-stranded RNA (foldase). Together with SIRT7, required to prevent R-loop-associated DNA damage and transcription-associated genomic instability: deacetylation by SIRT7 activates the helicase activity, thereby overcoming R-loop-mediated stalling of RNA polymerases. Involved in rRNA processing. May bind to specific miRNA hairpins. Component of a multi-helicase-TICAM1 complex that acts as a cytoplasmic sensor of viral double-stranded RNA (dsRNA) and plays a role in the activation of a cascade of antiviral responses including the induction of pro-inflammatory cytokines via the adapter molecule TICAM1. In Rattus norvegicus (Rat), this protein is Nucleolar RNA helicase 2 (Ddx21).